We begin with the raw amino-acid sequence, 81 residues long: Photosystem I iron-sulfur center (81 aa).

4Fe-4S ferredoxin-type domains follow at residues 2-31 and 39-68; these read AHTV…MVPW and MASA…IRVY. Residues Cys-11, Cys-14, Cys-17, Cys-21, Cys-48, Cys-51, Cys-54, and Cys-58 each coordinate [4Fe-4S] cluster.

The eukaryotic PSI reaction center is composed of at least 11 subunits. The cofactor is [4Fe-4S] cluster.

It localises to the plastid. Its subcellular location is the chloroplast thylakoid membrane. The catalysed reaction is reduced [plastocyanin] + hnu + oxidized [2Fe-2S]-[ferredoxin] = oxidized [plastocyanin] + reduced [2Fe-2S]-[ferredoxin]. Apoprotein for the two 4Fe-4S centers FA and FB of photosystem I (PSI); essential for photochemical activity. FB is the terminal electron acceptor of PSI, donating electrons to ferredoxin. The C-terminus interacts with PsaA/B/D and helps assemble the protein into the PSI complex. Required for binding of PsaD and PsaE to PSI. PSI is a plastocyanin/cytochrome c6-ferredoxin oxidoreductase, converting photonic excitation into a charge separation, which transfers an electron from the donor P700 chlorophyll pair to the spectroscopically characterized acceptors A0, A1, FX, FA and FB in turn. The sequence is that of Photosystem I iron-sulfur center from Cyanidioschyzon merolae (strain NIES-3377 / 10D) (Unicellular red alga).